Consider the following 247-residue polypeptide: Acetoacetate decarboxylase 1 (247 aa).

K116 serves as the catalytic Schiff-base intermediate with acetoacetate.

This sequence belongs to the ADC family.

The catalysed reaction is acetoacetate + H(+) = acetone + CO2. In terms of biological role, catalyzes the conversion of acetoacetate to acetone and carbon dioxide. The protein is Acetoacetate decarboxylase 1 of Mesorhizobium japonicum (strain LMG 29417 / CECT 9101 / MAFF 303099) (Mesorhizobium loti (strain MAFF 303099)).